The primary structure comprises 153 residues: Ribonuclease H (153 aa).

The 142-residue stretch at 1-142 folds into the RNase H type-1 domain; sequence MTPEVVIYTD…ADALARKGLS (142 aa). Residues aspartate 10, glutamate 48, aspartate 70, and aspartate 134 each coordinate Mg(2+).

It belongs to the RNase H family. Monomer. The cofactor is Mg(2+).

It localises to the cytoplasm. It catalyses the reaction Endonucleolytic cleavage to 5'-phosphomonoester.. Its function is as follows. Endonuclease that specifically degrades the RNA of RNA-DNA hybrids. The protein is Ribonuclease H of Phenylobacterium zucineum (strain HLK1).